The sequence spans 372 residues: Cyclic GMP-AMP synthase-like receptor (372 aa).

Thr-68 contributes to the GTP binding site. Residues Ser-70 and 82–84 (EFD) each bind ATP. Mg(2+)-binding residues include Glu-82, Asp-84, and Asp-190. GTP contacts are provided by residues Asp-190 and 236 to 243 (LVCAPYWE). ATP is bound by residues 240–243 (PYWE), Lys-261, and 274–278 (SYTIK).

The protein belongs to the mab-21 family. The cofactor is Mg(2+). It depends on Mn(2+) as a cofactor.

The catalysed reaction is GTP + ATP = 3',2'-cGAMP + 2 diphosphate. It catalyses the reaction GTP + ATP = pppA(2'-5')pG + diphosphate. It carries out the reaction pppA(2'-5')pG = 3',2'-cGAMP + diphosphate. With respect to regulation, the enzyme activity is specifically activated by double-stranded RNA (dsRNA). In terms of biological role, nucleotidyltransferase that catalyzes the formation of cyclic GMP-AMP (3',2'-cGAMP) from ATP and GTP and plays a key role in innate immunity. Synthesizes 3',2'-cGAMP in a two-step reaction through production of the linear intermediate pppA(2'-5')pG. Acts as a key sensor of double-stranded RNA (dsRNA), the presence of dsRNA in the cytoplasm being a danger signal that triggers the immune responses. Directly binds dsRNA longer than 15 bp, activating the nucleotidyltransferase activity, leading to synthesis of 3',2'-cGAMP, a second messenger that binds to and activates Sting, thereby triggering the antiviral immune response via activation of the NF-kappa-B transcription factor Rel (Relish). The chain is Cyclic GMP-AMP synthase-like receptor from Drosophila eugracilis (Fruit fly).